The chain runs to 699 residues: Polyribonucleotide nucleotidyltransferase (699 aa).

Positions 487 and 493 each coordinate Mg(2+). The region spanning 554–613 (PRMLNMKINPEKIRDVIGKGGAVIRALQEETGTVIEIEDDGSITISSVSAEGAQKAKARI) is the KH domain. One can recognise an S1 motif domain in the interval 623-691 (GKVYEGTVVR…ERGKIRLSMK (69 aa)).

The protein belongs to the polyribonucleotide nucleotidyltransferase family. Mg(2+) is required as a cofactor.

It is found in the cytoplasm. It carries out the reaction RNA(n+1) + phosphate = RNA(n) + a ribonucleoside 5'-diphosphate. Involved in mRNA degradation. Catalyzes the phosphorolysis of single-stranded polyribonucleotides processively in the 3'- to 5'-direction. This is Polyribonucleotide nucleotidyltransferase from Azoarcus sp. (strain BH72).